The primary structure comprises 1017 residues: Sodium/potassium-transporting ATPase subunit alpha-2 (1017 aa).

A disordered region spans residues methionine 1–lysine 31. Residues methionine 1–proline 82 lie on the Cytoplasmic side of the membrane. Positions proline 77–proline 79 are interaction with phosphoinositide-3 kinase. A helical membrane pass occupies residues glutamate 83–alanine 103. At isoleucine 104–tyrosine 126 the chain is on the extracellular side. The helical transmembrane segment at leucine 127–alanine 147 threads the bilayer. At lysine 148–isoleucine 283 the chain is on the cytoplasmic side. The tract at residues lysine 207–histidine 228 is disordered. Residues aspartate 209–proline 224 show a composition bias toward polar residues. A helical membrane pass occupies residues glutamate 284–isoleucine 303. The Extracellular portion of the chain corresponds to leucine 304–alanine 315. A helical membrane pass occupies residues valine 316 to alanine 333. Topologically, residues threonine 334–leucine 766 are cytoplasmic. Aspartate 371 functions as the 4-aspartylphosphate intermediate in the catalytic mechanism. ATP is bound at residue lysine 502. Mg(2+)-binding residues include aspartate 711 and aspartate 715. A helical transmembrane segment spans residues lysine 767–leucine 786. The Extracellular segment spans residues phenylalanine 787 to leucine 796. The chain crosses the membrane as a helical span at residues glycine 797–alanine 817. The Cytoplasmic portion of the chain corresponds to tyrosine 818 to lysine 837. A helical transmembrane segment spans residues leucine 838–phenylalanine 860. Residues phenylalanine 861–cysteine 912 lie on the Extracellular side of the membrane. The helical transmembrane segment at histidine 913–lysine 932 threads the bilayer. At threonine 933–asparagine 945 the chain is on the cytoplasmic side. Serine 937 carries the post-translational modification Phosphoserine; by PKA. Residues lysine 946–tyrosine 964 form a helical membrane-spanning segment. Residues cysteine 965 to valine 979 are Extracellular-facing. The chain crosses the membrane as a helical span at residues threonine 980–lysine 1000. Residues leucine 1001–tyrosine 1017 lie on the Cytoplasmic side of the membrane.

It belongs to the cation transport ATPase (P-type) (TC 3.A.3) family. Type IIC subfamily. In terms of assembly, the sodium/potassium-transporting ATPase is composed of a catalytic alpha subunit, an auxiliary non-catalytic beta subunit and an additional regulatory subunit.

Its subcellular location is the membrane. The protein resides in the cell membrane. It catalyses the reaction K(+)(out) + Na(+)(in) + ATP + H2O = K(+)(in) + Na(+)(out) + ADP + phosphate + H(+). Functionally, this is the catalytic component of the active enzyme, which catalyzes the hydrolysis of ATP coupled with the exchange of sodium and potassium ions across the plasma membrane. This action creates the electrochemical gradient of sodium and potassium ions, providing the energy for active transport of various nutrients. This is Sodium/potassium-transporting ATPase subunit alpha-2 (ATP1A2) from Gallus gallus (Chicken).